A 180-amino-acid chain; its full sequence is tRNA (cytidine(56)-2'-O)-methyltransferase (180 aa).

Residues Leu84 and 112-116 contribute to the S-adenosyl-L-methionine site; that span reads GAEKV.

Belongs to the aTrm56 family. Homodimer.

It localises to the cytoplasm. The enzyme catalyses cytidine(56) in tRNA + S-adenosyl-L-methionine = 2'-O-methylcytidine(56) in tRNA + S-adenosyl-L-homocysteine + H(+). In terms of biological role, specifically catalyzes the AdoMet-dependent 2'-O-ribose methylation of cytidine at position 56 in tRNAs. This chain is tRNA (cytidine(56)-2'-O)-methyltransferase, found in Haloarcula marismortui (strain ATCC 43049 / DSM 3752 / JCM 8966 / VKM B-1809) (Halobacterium marismortui).